The primary structure comprises 246 residues: Protein PHLOEM PROTEIN 2-LIKE A1 (246 aa).

Vascular tissues, specifically in phloem companion cell-sieve element complexes.

In Arabidopsis thaliana (Mouse-ear cress), this protein is Protein PHLOEM PROTEIN 2-LIKE A1 (PP2A1).